A 216-amino-acid polypeptide reads, in one-letter code: Probable transaldolase (216 aa).

Residue K83 is the Schiff-base intermediate with substrate of the active site.

Belongs to the transaldolase family. Type 3B subfamily.

It localises to the cytoplasm. It catalyses the reaction D-sedoheptulose 7-phosphate + D-glyceraldehyde 3-phosphate = D-erythrose 4-phosphate + beta-D-fructose 6-phosphate. The protein operates within carbohydrate degradation; pentose phosphate pathway; D-glyceraldehyde 3-phosphate and beta-D-fructose 6-phosphate from D-ribose 5-phosphate and D-xylulose 5-phosphate (non-oxidative stage): step 2/3. Transaldolase is important for the balance of metabolites in the pentose-phosphate pathway. This chain is Probable transaldolase, found in Caldanaerobacter subterraneus subsp. tengcongensis (strain DSM 15242 / JCM 11007 / NBRC 100824 / MB4) (Thermoanaerobacter tengcongensis).